The following is a 102-amino-acid chain: Small ribosomal subunit protein bS20 (102 aa).

Belongs to the bacterial ribosomal protein bS20 family.

Binds directly to 16S ribosomal RNA. This is Small ribosomal subunit protein bS20 from Synechococcus sp. (strain WH7803).